The sequence spans 171 residues: Transcription antitermination protein NusB (171 aa).

Belongs to the NusB family.

Functionally, involved in transcription antitermination. Required for transcription of ribosomal RNA (rRNA) genes. Binds specifically to the boxA antiterminator sequence of the ribosomal RNA (rrn) operons. This chain is Transcription antitermination protein NusB, found in Brucella suis (strain ATCC 23445 / NCTC 10510).